We begin with the raw amino-acid sequence, 440 residues long: Replication factor C large subunit (440 aa).

Glycine 48–threonine 55 is an ATP binding site.

Belongs to the activator 1 small subunits family. RfcL subfamily. In terms of assembly, heteromultimer composed of small subunits (RfcS) and large subunits (RfcL).

Functionally, part of the RFC clamp loader complex which loads the PCNA sliding clamp onto DNA. This chain is Replication factor C large subunit, found in Sulfurisphaera tokodaii (strain DSM 16993 / JCM 10545 / NBRC 100140 / 7) (Sulfolobus tokodaii).